The chain runs to 634 residues: Leucine--tRNA ligase subunit alpha (634 aa).

A 'HIGH' region motif is present at residues 43–51; the sequence is PSGRIHMGH.

This sequence belongs to the class-I aminoacyl-tRNA synthetase family. As to quaternary structure, seems to consist of an alpha chain and a beta chain.

It localises to the cytoplasm. It catalyses the reaction tRNA(Leu) + L-leucine + ATP = L-leucyl-tRNA(Leu) + AMP + diphosphate. The sequence is that of Leucine--tRNA ligase subunit alpha (leuS) from Aquifex aeolicus (strain VF5).